The chain runs to 177 residues: Large ribosomal subunit protein uL6 (177 aa).

It belongs to the universal ribosomal protein uL6 family. In terms of assembly, part of the 50S ribosomal subunit.

In terms of biological role, this protein binds to the 23S rRNA, and is important in its secondary structure. It is located near the subunit interface in the base of the L7/L12 stalk, and near the tRNA binding site of the peptidyltransferase center. In Rickettsia typhi (strain ATCC VR-144 / Wilmington), this protein is Large ribosomal subunit protein uL6.